A 643-amino-acid polypeptide reads, in one-letter code: Threonine--tRNA ligase (643 aa).

The TGS domain maps to 1 to 61 (MIKVTLKDGS…KEDVSLSICT (61 aa)). A catalytic region spans residues 240 to 540 (DHNKLGRELK…LIEKYAGAFP (301 aa)). Zn(2+)-binding residues include Cys-335, His-386, and His-517.

The protein belongs to the class-II aminoacyl-tRNA synthetase family. Homodimer. Zn(2+) is required as a cofactor.

The protein localises to the cytoplasm. It catalyses the reaction tRNA(Thr) + L-threonine + ATP = L-threonyl-tRNA(Thr) + AMP + diphosphate + H(+). Its function is as follows. Catalyzes the attachment of threonine to tRNA(Thr) in a two-step reaction: L-threonine is first activated by ATP to form Thr-AMP and then transferred to the acceptor end of tRNA(Thr). Also edits incorrectly charged L-seryl-tRNA(Thr). The polypeptide is Threonine--tRNA ligase (Clostridium botulinum (strain Eklund 17B / Type B)).